The following is a 314-amino-acid chain: MGVKNHSTVTEFLLSGLTEQAELQLPLFCLFLGIYTVTVVGNLSMISIIRLNRQLHTPMYYFLSSLSFLDFCYSSVITPKMLSGFLCRDRSISYSGCMIQLFFFCVCVISECYMLAAMACDRYVAICSPLLYRVIMSPRVCSLLVAAVFSVGFTDAVIHGGCILRLSFCGSNIIKHYFCDIVPLIKLSCSSTYIDELLIFVIGGFNMVATSLTIIISYAFILTSILRIHSKKGRCKAFSTCSSHLTAVLMFYGSLMSMYLKPASSSSLTQEKVSSVFYTTVILMLNPLIYSLRNNEVRNALMKLLRRKISLSPG.

The Extracellular portion of the chain corresponds to 1 to 25 (MGVKNHSTVTEFLLSGLTEQAELQL). Asparagine 5 carries an N-linked (GlcNAc...) asparagine glycan. Residues 26 to 46 (PLFCLFLGIYTVTVVGNLSMI) traverse the membrane as a helical segment. The Cytoplasmic portion of the chain corresponds to 47-54 (SIIRLNRQ). A helical transmembrane segment spans residues 55–75 (LHTPMYYFLSSLSFLDFCYSS). The Extracellular portion of the chain corresponds to 76–99 (VITPKMLSGFLCRDRSISYSGCMI). Cysteines 97 and 189 form a disulfide. Residues 100–120 (QLFFFCVCVISECYMLAAMAC) traverse the membrane as a helical segment. At 121 to 139 (DRYVAICSPLLYRVIMSPR) the chain is on the cytoplasmic side. Residues 140-160 (VCSLLVAAVFSVGFTDAVIHG) traverse the membrane as a helical segment. The Extracellular segment spans residues 161 to 197 (GCILRLSFCGSNIIKHYFCDIVPLIKLSCSSTYIDEL). A helical transmembrane segment spans residues 198–217 (LIFVIGGFNMVATSLTIIIS). Residues 218–237 (YAFILTSILRIHSKKGRCKA) lie on the Cytoplasmic side of the membrane. Residues 238–258 (FSTCSSHLTAVLMFYGSLMSM) form a helical membrane-spanning segment. The Extracellular portion of the chain corresponds to 259-271 (YLKPASSSSLTQE). Residues 272-292 (KVSSVFYTTVILMLNPLIYSL) form a helical membrane-spanning segment. At 293–314 (RNNEVRNALMKLLRRKISLSPG) the chain is on the cytoplasmic side.

This sequence belongs to the G-protein coupled receptor 1 family.

It localises to the cell membrane. Its function is as follows. Odorant receptor. The protein is Olfactory receptor 8D4 (OR8D4) of Homo sapiens (Human).